The chain runs to 262 residues: 3-methyl-2-oxobutanoate hydroxymethyltransferase (262 aa).

Asp44 and Asp83 together coordinate Mg(2+). 3-methyl-2-oxobutanoate-binding positions include Asp44 to Ser45, Asp83, and Lys112. Glu114 is a binding site for Mg(2+). The active-site Proton acceptor is Glu181.

It belongs to the PanB family. Homodecamer; pentamer of dimers. Requires Mg(2+) as cofactor.

It is found in the cytoplasm. The enzyme catalyses 3-methyl-2-oxobutanoate + (6R)-5,10-methylene-5,6,7,8-tetrahydrofolate + H2O = 2-dehydropantoate + (6S)-5,6,7,8-tetrahydrofolate. It participates in cofactor biosynthesis; (R)-pantothenate biosynthesis; (R)-pantoate from 3-methyl-2-oxobutanoate: step 1/2. Catalyzes the reversible reaction in which hydroxymethyl group from 5,10-methylenetetrahydrofolate is transferred onto alpha-ketoisovalerate to form ketopantoate. The polypeptide is 3-methyl-2-oxobutanoate hydroxymethyltransferase (Thiobacillus denitrificans (strain ATCC 25259 / T1)).